The chain runs to 366 residues: Quinolinate synthase (366 aa).

His-44 and Ser-61 together coordinate iminosuccinate. Residue Cys-108 coordinates [4Fe-4S] cluster. Iminosuccinate contacts are provided by residues 139 to 141 (YIN) and Ser-160. A [4Fe-4S] cluster-binding site is contributed by Cys-228. Residues 254–256 (HPE) and Thr-271 each bind iminosuccinate. Cys-318 is a [4Fe-4S] cluster binding site.

This sequence belongs to the quinolinate synthase family. Type 3 subfamily. [4Fe-4S] cluster is required as a cofactor.

It localises to the cytoplasm. The enzyme catalyses iminosuccinate + dihydroxyacetone phosphate = quinolinate + phosphate + 2 H2O + H(+). It participates in cofactor biosynthesis; NAD(+) biosynthesis; quinolinate from iminoaspartate: step 1/1. Catalyzes the condensation of iminoaspartate with dihydroxyacetone phosphate to form quinolinate. This Listeria innocua serovar 6a (strain ATCC BAA-680 / CLIP 11262) protein is Quinolinate synthase.